The primary structure comprises 231 residues: Probable septum site-determining protein MinC (231 aa).

The protein belongs to the MinC family. Interacts with MinD and FtsZ.

Cell division inhibitor that blocks the formation of polar Z ring septums. Rapidly oscillates between the poles of the cell to destabilize FtsZ filaments that have formed before they mature into polar Z rings. Prevents FtsZ polymerization. In Baumannia cicadellinicola subsp. Homalodisca coagulata, this protein is Probable septum site-determining protein MinC.